The following is a 122-amino-acid chain: Large ribosomal subunit protein uL14 (122 aa).

It belongs to the universal ribosomal protein uL14 family. As to quaternary structure, part of the 50S ribosomal subunit. Forms a cluster with proteins L3 and L19. In the 70S ribosome, L14 and L19 interact and together make contacts with the 16S rRNA in bridges B5 and B8.

Binds to 23S rRNA. Forms part of two intersubunit bridges in the 70S ribosome. The sequence is that of Large ribosomal subunit protein uL14 from Allorhizobium ampelinum (strain ATCC BAA-846 / DSM 112012 / S4) (Agrobacterium vitis (strain S4)).